A 1481-amino-acid polypeptide reads, in one-letter code: Cystic fibrosis transmembrane conductance regulator (1481 aa).

Over 1–77 the chain is Cytoplasmic; it reads MQKSPLVKAS…KLINALRRCF (77 aa). The helical transmembrane segment at 78–98 threads the bilayer; it reads LWRFIFYGILLYLGEVTKAVQ. An ABC transmembrane type-1 1 domain is found at 81–365; the sequence is FIFYGILLYL…GAVQTWYDSL (285 aa). Residues 99-122 lie on the Extracellular side of the membrane; that stretch reads PLLLGRIIASYDPDNKEERSIAIY. Residues 123 to 146 traverse the membrane as a helical segment; the sequence is LAIGLCLLFIVRTLLLHPAIFGLQ. The Cytoplasmic portion of the chain corresponds to 147–195; that stretch reads HIGMQMRIAMFSLIYKKTLKLSSRVLDKISIGQLVSLLSNNLNKFDEGL. Residues 196 to 216 traverse the membrane as a helical segment; the sequence is ALAHFVWIAPLQVTLLMGLLW. The Extracellular portion of the chain corresponds to 217 to 222; sequence DLLQAS. Residues 223–243 traverse the membrane as a helical segment; sequence AFCGLAVLIVLALFQAWLGKM. Over 244–298 the chain is Cytoplasmic; it reads MMKYRDQRAGKINERLVITSEMIENIQSVKAYCWEEAMEKMIENLRQTELKLTRK. A helical membrane pass occupies residues 299 to 319; that stretch reads AAYMRYFNSAAFFFSGFFVVF. Over 320–339 the chain is Extracellular; it reads LSVLPYAFLQGIILRKIFTT. Residues 340–358 traverse the membrane as a helical segment; that stretch reads ISFCIVLRMAITRQFPGAV. Topologically, residues 359-859 are cytoplasmic; that stretch reads QTWYDSLGAI…YLRYITVHKS (501 aa). Residues Trp401, Ser435, 459-466, and Gln494 each bind ATP; that span reads GSTGAGKT. Residues 424–647 form the ABC transporter 1 domain; that stretch reads NGDNKLFFSN…RPDFSSKLMG (224 aa). The S-palmitoyl cysteine moiety is linked to residue Cys525. Residue Ser550 is modified to Phosphoserine. The interval 655–832 is disordered R region; it reads SAERRNSILT…EEINEEDLKE (178 aa). Phosphoserine; by PKA occurs at positions 661 and 671. Ser687 carries the phosphoserine; by PKC modification. A Glycyl lysine isopeptide (Lys-Gly) (interchain with G-Cter in ubiquitin) cross-link involves residue Lys689. Phosphoserine; by PKA occurs at positions 701 and 713. The residue at position 718 (Thr718) is a Phosphothreonine. Phosphoserine; by PKA occurs at positions 738, 769, 796, and 814. Residues 860 to 880 form a helical membrane-spanning segment; sequence LILVLIWCLIIFLAEVAASLV. In terms of domain architecture, ABC transmembrane type-1 2 spans 860 to 1156; that stretch reads LILVLIWCLI…AVNSSIDVDS (297 aa). Topologically, residues 881–919 are extracellular; the sequence is VLWLLKNNTPQQEMNSTQSGNRSYPVIITNTSFYYIFYI. N-linked (GlcNAc...) asparagine glycans are attached at residues Asn895 and Asn901. Residues 920-940 form a discontinuously helical membrane-spanning segment; sequence YVGVADTLLALGLFRGLPLVH. The Cytoplasmic portion of the chain corresponds to 941 to 991; it reads TLITVSKILHHKMLRSVLQAPMSTLNALKAGGILNRFSKDIAILDDLLPLT. Residues 992–1012 form a helical membrane-spanning segment; that stretch reads IFDFIQLLLIVIGAIAVVSVL. The Extracellular segment spans residues 1013-1014; the sequence is QP. Residues 1015 to 1035 form a helical membrane-spanning segment; sequence YIFLATVPVIAAFIMLRAYFL. The Cytoplasmic portion of the chain corresponds to 1036 to 1096; sequence HTSQQLKQLE…TANWFLYLST (61 aa). Residues 1097–1117 form a helical membrane-spanning segment; sequence LRWFQMRIEMIFVIFFIAVTF. Residues 1118–1131 lie on the Extracellular side of the membrane; it reads ISILTTGEGQGSVG. The chain crosses the membrane as a helical span at residues 1132–1152; it reads IILTLAMNIMSTLQWAVNSSI. At 1153–1481 the chain is on the cytoplasmic side; sequence DVDSLMRSVS…TEEEVQETRL (329 aa). One can recognise an ABC transporter 2 domain in the interval 1211-1444; that stretch reads MIVKDLTAKY…KSLFRQAISS (234 aa). ATP-binding positions include Tyr1220 and 1245 to 1252; that span reads GRTGSGKS. The tract at residues 1387–1481 is interaction with GORASP2; that stretch reads RTIKQAFADC…TEEEVQETRL (95 aa). Cys1396 carries S-palmitoyl cysteine lipidation. A phosphoserine mark is found at Ser1445 and Ser1457. Over residues 1453-1462 the composition is skewed to basic residues; sequence HRNSSKHKSR. The segment at 1453-1481 is disordered; sequence HRNSSKHKSRSQITALKEETEEEVQETRL. Residues 1471-1481 are compositionally biased toward acidic residues; that stretch reads ETEEEVQETRL. The PDZ-binding signature appears at 1479–1481; that stretch reads TRL.

It belongs to the ABC transporter superfamily. ABCC family. CFTR transporter (TC 3.A.1.202) subfamily. Monomer; does not require oligomerization for channel activity. May form oligomers in the membrane. Interacts with SLC26A3, SLC26A6 and NHERF1. Interacts with SHANK2. Interacts with MYO6. Interacts (via C-terminus) with GOPC (via PDZ domain); this promotes CFTR internalization and thereby decreases channel activity. Interacts with SLC4A7 through NHERF1. Found in a complex with MYO5B and RAB11A. Interacts with ANO1. Interacts with SLC26A8. Interacts with AHCYL1; the interaction increases CFTR activity. Interacts with CSE1L. The core-glycosylated form interacts with GORASP2 (via PDZ GRASP-type 1 domain) in respone to ER stress. Interacts with MARCHF2; the interaction leads to CFTR ubiqtuitination and degradation. Interacts with ADGRG2. Post-translationally, N-glycosylated. Phosphorylated; cAMP treatment promotes phosphorylation and activates the channel. Dephosphorylation decreases the ATPase activity (in vitro). Phosphorylation at PKA sites activates the channel. Phosphorylation at PKC sites enhances the response to phosphorylation by PKA. Phosphorylated by AMPK; this inhibits channel activity. In terms of processing, ubiquitinated, leading to its degradation in the lysosome. Deubiquitination by USP10 in early endosomes enhances its endocytic recycling to the cell membrane. Ubiquitinated by RNF185 during ER stress. Ubiquitinated by MARCHF2.

It is found in the apical cell membrane. The protein resides in the early endosome membrane. It localises to the cell membrane. Its subcellular location is the recycling endosome membrane. The protein localises to the endoplasmic reticulum membrane. It is found in the nucleus. The enzyme catalyses ATP + H2O + closed Cl(-) channel = ADP + phosphate + open Cl(-) channel.. It catalyses the reaction chloride(in) = chloride(out). The catalysed reaction is hydrogencarbonate(in) = hydrogencarbonate(out). It carries out the reaction ATP + H2O = ADP + phosphate + H(+). Functionally, epithelial ion channel that plays an important role in the regulation of epithelial ion and water transport and fluid homeostasis. Mediates the transport of chloride ions across the cell membrane. Possesses an intrinsic ATPase activity and utilizes ATP to gate its channel; the passive flow of anions through the channel is gated by cycles of ATP binding and hydrolysis by the ATP-binding domains. The ion channel is also permeable to HCO(3)(-); selectivity depends on the extracellular chloride concentration. Exerts its function also by modulating the activity of other ion channels and transporters. Contributes to the regulation of the pH and the ion content of the epithelial fluid layer. Modulates the activity of the epithelial sodium channel (ENaC) complex, in part by regulating the cell surface expression of the ENaC complex. May regulate bicarbonate secretion and salvage in epithelial cells by regulating the transporter SLC4A7. Can inhibit the chloride channel activity of ANO1. Plays a role in the chloride and bicarbonate homeostasis during sperm epididymal maturation and capacitation. The sequence is that of Cystic fibrosis transmembrane conductance regulator from Cavia porcellus (Guinea pig).